The primary structure comprises 204 residues: Viral interleukin-6 homolog (204 aa).

The signal sequence occupies residues 1–22; that stretch reads MRWFKLWSILLVGSLLVSGTRG.

Belongs to the IL-6 superfamily. As to quaternary structure, interacts with host IL6ST.

Initiates signal transduction through binding to interleukin-6 receptor subunit beta IL6ST, independently of the cognate IL6 receptor IL6R. In infected primary effusion lymphoma cells, promotes proliferation of cells, protects them from apoptosis, and promotes immune evasion of interferon activity. Also drives blood to lymphatic endothelial cell differentiation. This Homo sapiens (Human) protein is Viral interleukin-6 homolog (K2).